A 105-amino-acid chain; its full sequence is Tyrosine-protein phosphatase 12 (105 aa).

The 105-residue stretch at 1–105 folds into the Tyrosine-protein phosphatase domain; the sequence is WRMIWEKRVE…NLRRIVRTEF (105 aa). Asp84 is a substrate binding site.

The protein belongs to the protein-tyrosine phosphatase family.

The catalysed reaction is O-phospho-L-tyrosyl-[protein] + H2O = L-tyrosyl-[protein] + phosphate. The sequence is that of Tyrosine-protein phosphatase 12 (STY-12) from Styela plicata (Wrinkled sea squirt).